Reading from the N-terminus, the 215-residue chain is Pyridoxine/pyridoxamine 5'-phosphate oxidase (215 aa).

Residues 9–12 (RREY) and Lys69 each bind substrate. FMN is bound by residues 64–69 (RILLLK), 79–80 (FT), Lys86, and Gln108. Tyr126, Arg130, and Ser134 together coordinate substrate. FMN contacts are provided by residues 143–144 (QS) and Trp188. 194 to 196 (RLH) is a substrate binding site. Arg198 contributes to the FMN binding site.

Belongs to the pyridoxamine 5'-phosphate oxidase family. Homodimer. Requires FMN as cofactor.

The enzyme catalyses pyridoxamine 5'-phosphate + O2 + H2O = pyridoxal 5'-phosphate + H2O2 + NH4(+). The catalysed reaction is pyridoxine 5'-phosphate + O2 = pyridoxal 5'-phosphate + H2O2. It functions in the pathway cofactor metabolism; pyridoxal 5'-phosphate salvage; pyridoxal 5'-phosphate from pyridoxamine 5'-phosphate: step 1/1. It participates in cofactor metabolism; pyridoxal 5'-phosphate salvage; pyridoxal 5'-phosphate from pyridoxine 5'-phosphate: step 1/1. In terms of biological role, catalyzes the oxidation of either pyridoxine 5'-phosphate (PNP) or pyridoxamine 5'-phosphate (PMP) into pyridoxal 5'-phosphate (PLP). The sequence is that of Pyridoxine/pyridoxamine 5'-phosphate oxidase from Pseudomonas paraeruginosa (strain DSM 24068 / PA7) (Pseudomonas aeruginosa (strain PA7)).